The chain runs to 428 residues: Spliceosome RNA helicase DDX39B (428 aa).

A compositionally biased stretch (acidic residues) spans 1-19; that stretch reads MAENDVDNELLDYEDDEVE. The segment at 1–31 is disordered; sequence MAENDVDNELLDYEDDEVETAAGGDGAEAPA. Ala-2 bears the N-acetylalanine mark. N6-acetyllysine; alternate is present on Lys-36. Residue Lys-36 forms a Glycyl lysine isopeptide (Lys-Gly) (interchain with G-Cter in SUMO2); alternate linkage. 2 positions are modified to phosphoserine: Ser-38 and Ser-41. Positions 45 to 73 match the Q motif motif; that stretch reads SGFRDFLLKPELLRAIVDCGFEHPSEVQH. The Helicase ATP-binding domain maps to 76-249; sequence IPQAILGMDV…RKFMQDPMEI (174 aa). 89–96 contributes to the ATP binding site; that stretch reads AKSGMGKT. Thr-172 is modified (phosphothreonine). The DECD box motif lies at 196–199; it reads DECD. Residues 261-422 form the Helicase C-terminal domain; sequence GLQQYYVKLK…ELPDEIDISS (162 aa).

This sequence belongs to the DEAD box helicase family. DECD subfamily. Homodimer, and heterodimer with DDX39A. DDX39B interacts with the THO subcomplex to form the THO-DDX39B complex which multimerizes into a 28-subunit tetrameric assembly. Component of the transcription/export (TREX) complex at least composed of ALYREF/THOC4, DDX39B, SARNP/CIP29, CHTOP and the THO subcomplex; in the complex interacts with THOC2. THOC1-THOC2-THOC3-DDX39B subcomplex is sufficient for the interaction with export factor NXF1-NXT1. TREX seems to have a dynamic structure involving ATP-dependent remodeling. Within the TREX complex bridges ALYREF/THOC4 and the THO subcomplex, and, in a ATP-dependent manner, ALYREF/THOC4 and SARNP/CIP29. Component of the spliceosome. Interacts directly with U2AF2. Interacts with RBM8A, RNPS1 and SRRM1, FYTTD1/UIF, THOC1, MX1 and POLDIP3. Interacts with LUZP4. Interacts with SARNP/CIP29 (via the C-terminal domain); the interaction is direct and facilitates RNA binding of DDX39B. As to quaternary structure, (Microbial infection) Interacts with human cytomegalovirus/HHV-5 protein UL69.

It localises to the nucleus. Its subcellular location is the nucleus speckle. The protein resides in the cytoplasm. It carries out the reaction ATP + H2O = ADP + phosphate + H(+). Functionally, involved in nuclear export of spliced and unspliced mRNA. Component of the TREX complex which is thought to couple mRNA transcription, processing and nuclear export, and specifically associates with spliced mRNA and not with unspliced pre-mRNA. The TREX complex is recruited to spliced mRNAs by a transcription-independent mechanism, binds to mRNA upstream of the exon-junction complex (EJC) and is recruited in a splicing- and cap-dependent manner to a region near the 5' end of the mRNA where it functions in mRNA export to the cytoplasm via the TAP/NXF1 pathway. The THOC1-THOC2-THOC3 core complex alone is sufficient to promote ATPase activity of DDX39B; in the complex THOC2 is the only component that directly interacts with DDX39B. Associates with SARNP/CIP29, which facilitates RNA binding of DDX39B and likely plays a role in mRNA export. May undergo several rounds of ATP hydrolysis during assembly of TREX to drive subsequent loading of components such as ALYREF/THOC4 and CHTOP onto mRNA. Also associates with pre-mRNA independent of ALYREF/THOC4. Involved in the nuclear export of intronless mRNA; the ATP-bound form is proposed to recruit export adapter ALYREF/THOC4 to intronless mRNA; its ATPase activity is cooperatively stimulated by RNA and ALYREF/THOC4 and ATP hydrolysis is thought to trigger the dissociation from RNA to allow the association of ALYREF/THOC4 and the NXF1-NXT1 heterodimer. Involved in transcription elongation and genome stability. Splice factor that is required for the first ATP-dependent step in spliceosome assembly and for the interaction of U2 snRNP with the branchpoint. Has both RNA-stimulated ATP binding/hydrolysis activity and ATP-dependent RNA unwinding activity. Even with the stimulation of RNA, the ATPase activity is weak. Can only hydrolyze ATP but not other NTPs. The RNA stimulation of ATPase activity does not have a strong preference for the sequence and length of the RNA. However, ssRNA stimulates the ATPase activity much more strongly than dsRNA. Can unwind 5' or 3' overhangs or blunt end RNA duplexes in vitro. The ATPase and helicase activities are not influenced by U2AF2; the effect of ALYREF/THOC4 is reported conflictingly with [PubMed:23299939] reporting a stimulatory effect. Its function is as follows. (Microbial infection) The TREX complex is essential for the export of Kaposi's sarcoma-associated herpesvirus (KSHV) intronless mRNAs and infectious virus production. In Homo sapiens (Human), this protein is Spliceosome RNA helicase DDX39B.